The primary structure comprises 352 residues: Elongation factor Ts (352 aa).

Positions 81 to 84 are involved in Mg(2+) ion dislocation from EF-Tu; the sequence is TDFV.

This sequence belongs to the EF-Ts family.

The protein localises to the cytoplasm. In terms of biological role, associates with the EF-Tu.GDP complex and induces the exchange of GDP to GTP. It remains bound to the aminoacyl-tRNA.EF-Tu.GTP complex up to the GTP hydrolysis stage on the ribosome. The sequence is that of Elongation factor Ts from Campylobacter hominis (strain ATCC BAA-381 / DSM 21671 / CCUG 45161 / LMG 19568 / NCTC 13146 / CH001A).